The chain runs to 240 residues: Uridylate kinase (240 aa).

ATP is bound at residue 12-15 (KLSG). The involved in allosteric activation by GTP stretch occupies residues 20–25 (GEQGNG). G54 is a binding site for UMP. 2 residues coordinate ATP: G55 and R59. UMP is bound by residues D74 and 135–142 (TGNPYFST). 3 residues coordinate ATP: N163, Y169, and D172.

Belongs to the UMP kinase family. Homohexamer.

The protein localises to the cytoplasm. The catalysed reaction is UMP + ATP = UDP + ADP. Its pathway is pyrimidine metabolism; CTP biosynthesis via de novo pathway; UDP from UMP (UMPK route): step 1/1. Allosterically activated by GTP. Inhibited by UTP. Functionally, catalyzes the reversible phosphorylation of UMP to UDP. The sequence is that of Uridylate kinase from Bacillus licheniformis (strain ATCC 14580 / DSM 13 / JCM 2505 / CCUG 7422 / NBRC 12200 / NCIMB 9375 / NCTC 10341 / NRRL NRS-1264 / Gibson 46).